We begin with the raw amino-acid sequence, 1487 residues long: Collagen alpha-1(II) chain (1487 aa).

A signal peptide spans 1-25; that stretch reads MIRLGAPQTLVLLTLLVAAVLRCQG. Residues 26 to 181 constitute a propeptide, N-terminal propeptide; the sequence is QDVQEAGSCV…PPGLGGNFAA (156 aa). In terms of domain architecture, VWFC spans 32 to 90; that stretch reads GSCVQDGQRYNDKDVWKPEPCRICVCDTGTVLCDDIICEDVKDCLSPEIPFGECCPICP. The segment at 97-1237 is disordered; the sequence is SGQPGPKGQK…PREKGPDPLQ (1141 aa). 2 stretches are compositionally biased toward basic and acidic residues: residues 105–116 and 133–154; these read QKGEPGDIKDIV and PRGDRGDKGEKGAPGPRGRDGE. Over residues 158–173 the composition is skewed to pro residues; sequence PGNPGPPGPPGPPGPP. A 5-hydroxylysine modification is found at lysine 190. The O-linked (Gal...) hydroxylysine glycan is linked to lysine 190. A triple-helical region region spans residues 201 to 1214; that stretch reads GPMGPMGPRG…PGPPGPPGPP (1014 aa). Residues 208–217 are compositionally biased toward pro residues; it reads PRGPPGPAGA. Over residues 218 to 239 the composition is skewed to low complexity; it reads PGPQGFQGNPGEPGEPGVSGPM. Over residues 241–250 the composition is skewed to pro residues; sequence PRGPPGPPGK. Over residues 251-265 the composition is skewed to basic and acidic residues; that stretch reads PGDDGEAGKPGKAGE. 5-hydroxylysine occurs at positions 287, 299, and 308. O-linked (Gal...) hydroxylysine glycans are attached at residues lysine 287, lysine 299, and lysine 308. Composition is skewed to low complexity over residues 310-320 and 335-350; these read ESGSPGENGSP and TGPAGAAGARGNDGQP. Over residues 360–369 the composition is skewed to gly residues; it reads GPAGGPGFPG. Composition is skewed to low complexity over residues 370–382 and 391–431; these read APGAKGEAGPTGA and PRGE…AGAP. 5-hydroxylysine is present on lysine 374. The O-linked (Gal...) hydroxylysine glycan is linked to lysine 374. Over residues 433–442 the composition is skewed to pro residues; sequence FPGPRGPPGP. 5-hydroxylysine occurs at positions 608 and 620. 2 O-linked (Gal...) hydroxylysine glycosylation sites follow: lysine 608 and lysine 620. 2 stretches are compositionally biased toward low complexity: residues 622-631 and 656-667; these read LPGAPGLRGL and QGAPGPSGFQGL. 4-hydroxyproline is present on residues proline 659 and proline 668. Residue proline 670 is modified to 3-hydroxyproline. 2 positions are modified to 4-hydroxyproline: proline 671 and proline 674. A compositionally biased stretch (basic and acidic residues) spans 764–775; it reads KGDRGDVGEKGP. Low complexity-rich tracts occupy residues 833–848 and 877–913; these read AGFAGPPGADGQPGAK and PTGVTGPKGARGAQGPPGATGFPGAAGRVGPPGSNGN. Proline 907 bears the 3-hydroxyproline mark. 4-hydroxyproline is present on residues proline 908, proline 914, and proline 920. Pro residues predominate over residues 1069-1079; it reads APGPPGSPGPA. Positions 1115–1129 are enriched in basic and acidic residues; the sequence is RGDKGEAGEPGERGL. Position 1130 is a 5-hydroxylysine (lysine 1130). A glycan (O-linked (Gal...) hydroxylysine) is linked at lysine 1130. Residue proline 1144 is modified to 3-hydroxyproline. Residues 1148-1157 show a composition bias toward low complexity; that stretch reads SGDQGASGPA. At proline 1181 the chain carries 4-hydroxyproline. At proline 1186 the chain carries 3-hydroxyproline. Proline 1187 carries the post-translational modification 4-hydroxyproline. Over residues 1199-1216 the composition is skewed to pro residues; it reads AGPPGNPGPPGPPGPPGP. At proline 1201 the chain carries 3-hydroxyproline. Residues proline 1202 and proline 1205 each carry the 4-hydroxyproline modification. The residue at position 1207 (proline 1207) is a 3-hydroxyproline. Proline 1208 and proline 1211 each carry 4-hydroxyproline. Proline 1213 carries the post-translational modification 3-hydroxyproline. Proline 1214 bears the 4-hydroxyproline mark. The nonhelical region (C-terminal) stretch occupies residues 1215 to 1241; the sequence is GPGIDMSAFAGLGPREKGPDPLQYMRA. Residues 1253–1487 enclose the Fibrillar collagen NC1 domain; the sequence is AEVDATLKSL…GVDIGPVCFL (235 aa). 3 cysteine pairs are disulfide-bonded: cysteine 1283-cysteine 1315, cysteine 1323-cysteine 1485, and cysteine 1393-cysteine 1438. Positions 1301, 1303, 1304, 1306, and 1309 each coordinate Ca(2+). N-linked (GlcNAc...) asparagine glycosylation occurs at asparagine 1388.

It belongs to the fibrillar collagen family. As to quaternary structure, homotrimers of alpha 1(II) chains. The N-telopeptide is covalently linked to the helical COL2 region of alpha 1(IX), alpha 2(IX) and alpha 3(IX) chain. The C-telopeptide is covalently linked to an another site in the helical region of alpha 3(IX) COL2. In terms of processing, contains mostly 4-hydroxyproline. Prolines at the third position of the tripeptide repeating unit (G-X-P) are 4-hydroxylated in some or all of the chains. Post-translationally, contains 3-hydroxyproline at a few sites. This modification occurs on the first proline residue in the sequence motif Gly-Pro-Hyp, where Hyp is 4-hydroxyproline. Lysine residues at the third position of the tripeptide repeating unit (G-X-Y) are 5-hydroxylated in some or all of the chains. In terms of processing, O-glycosylated on hydroxylated lysine residues. The O-linked glycan consists of a Glc-Gal disaccharide. Isoform 2 is highly expressed in juvenile chondrocyte and low in fetal chondrocyte.

It localises to the secreted. Its subcellular location is the extracellular space. The protein resides in the extracellular matrix. Type II collagen is specific for cartilaginous tissues. It is essential for the normal embryonic development of the skeleton, for linear growth and for the ability of cartilage to resist compressive forces. The protein is Collagen alpha-1(II) chain of Homo sapiens (Human).